The primary structure comprises 360 residues: Geranylgeranyl pyrophosphate synthase 3, chloroplastic (360 aa).

A chloroplast-targeting transit peptide spans 1-39 (MATTVHLSSFSLFIQSRGRRDNSISSVKSLKKRTGLSPS). The interval 24–54 (ISSVKSLKKRTGLSPSSALTSQGGRDMIPPE) is disordered. The segment covering 36–46 (LSPSSALTSQG) has biased composition (polar residues). Positions 106, 109, and 138 each coordinate isopentenyl diphosphate. Residues Asp145 and Asp151 each contribute to the Mg(2+) site. Dimethylallyl diphosphate is bound at residue Arg156. Position 157 (Arg157) interacts with isopentenyl diphosphate. Dimethylallyl diphosphate is bound by residues Lys245, Thr246, Gln283, Lys300, and Lys310.

It belongs to the FPP/GGPP synthase family. In terms of assembly, monomer. It depends on Mg(2+) as a cofactor. As to expression, mainly expressed in roots.

The protein resides in the plastid. The protein localises to the chloroplast. It carries out the reaction isopentenyl diphosphate + dimethylallyl diphosphate = (2E)-geranyl diphosphate + diphosphate. It catalyses the reaction isopentenyl diphosphate + (2E)-geranyl diphosphate = (2E,6E)-farnesyl diphosphate + diphosphate. The enzyme catalyses isopentenyl diphosphate + (2E,6E)-farnesyl diphosphate = (2E,6E,10E)-geranylgeranyl diphosphate + diphosphate. It participates in isoprenoid biosynthesis; farnesyl diphosphate biosynthesis; farnesyl diphosphate from geranyl diphosphate and isopentenyl diphosphate: step 1/1. Its pathway is isoprenoid biosynthesis; geranyl diphosphate biosynthesis; geranyl diphosphate from dimethylallyl diphosphate and isopentenyl diphosphate: step 1/1. The protein operates within isoprenoid biosynthesis; geranylgeranyl diphosphate biosynthesis; geranylgeranyl diphosphate from farnesyl diphosphate and isopentenyl diphosphate: step 1/1. Its function is as follows. Catalyzes the trans-addition of the three molecules of IPP onto DMAPP to form geranylgeranyl pyrophosphate. The sequence is that of Geranylgeranyl pyrophosphate synthase 3, chloroplastic (GGPP3) from Arabidopsis thaliana (Mouse-ear cress).